A 446-amino-acid polypeptide reads, in one-letter code: Probable glycine dehydrogenase (decarboxylating) subunit 1 (446 aa).

The protein belongs to the GcvP family. N-terminal subunit subfamily. In terms of assembly, the glycine cleavage system is composed of four proteins: P, T, L and H. In this organism, the P 'protein' is a heterodimer of two subunits.

It catalyses the reaction N(6)-[(R)-lipoyl]-L-lysyl-[glycine-cleavage complex H protein] + glycine + H(+) = N(6)-[(R)-S(8)-aminomethyldihydrolipoyl]-L-lysyl-[glycine-cleavage complex H protein] + CO2. The glycine cleavage system catalyzes the degradation of glycine. The P protein binds the alpha-amino group of glycine through its pyridoxal phosphate cofactor; CO(2) is released and the remaining methylamine moiety is then transferred to the lipoamide cofactor of the H protein. The sequence is that of Probable glycine dehydrogenase (decarboxylating) subunit 1 from Desulforamulus reducens (strain ATCC BAA-1160 / DSM 100696 / MI-1) (Desulfotomaculum reducens).